Consider the following 271-residue polypeptide: 2-dehydro-3-deoxyphosphooctonate aldolase (271 aa).

Belongs to the KdsA family.

The protein localises to the cytoplasm. The catalysed reaction is D-arabinose 5-phosphate + phosphoenolpyruvate + H2O = 3-deoxy-alpha-D-manno-2-octulosonate-8-phosphate + phosphate. Its pathway is carbohydrate biosynthesis; 3-deoxy-D-manno-octulosonate biosynthesis; 3-deoxy-D-manno-octulosonate from D-ribulose 5-phosphate: step 2/3. The protein operates within bacterial outer membrane biogenesis; lipopolysaccharide biosynthesis. The polypeptide is 2-dehydro-3-deoxyphosphooctonate aldolase (Campylobacter jejuni subsp. jejuni serotype O:2 (strain ATCC 700819 / NCTC 11168)).